Consider the following 284-residue polypeptide: L-ribulose-5-phosphate 3-epimerase UlaE (284 aa).

Belongs to the L-ribulose-5-phosphate 3-epimerase family.

The enzyme catalyses L-ribulose 5-phosphate = L-xylulose 5-phosphate. Its pathway is cofactor degradation; L-ascorbate degradation; D-xylulose 5-phosphate from L-ascorbate: step 3/4. Catalyzes the isomerization of L-xylulose-5-phosphate to L-ribulose-5-phosphate. Is involved in the anaerobic L-ascorbate utilization. This is L-ribulose-5-phosphate 3-epimerase UlaE from Salmonella typhi.